Reading from the N-terminus, the 298-residue chain is Tyrosine recombinase XerC (298 aa).

The Core-binding (CB) domain occupies 1 to 83 (MHAAVERFLH…ALSRFADHLV (83 aa)). The Tyr recombinase domain occupies 104–283 (HLPRPVDVDQ…DWQHLADAYD (180 aa)). Residues R144, K166, H235, R238, and H261 contribute to the active site. Catalysis depends on Y270, which acts as the O-(3'-phospho-DNA)-tyrosine intermediate.

The protein belongs to the 'phage' integrase family. XerC subfamily. As to quaternary structure, forms a cyclic heterotetrameric complex composed of two molecules of XerC and two molecules of XerD.

It is found in the cytoplasm. Its function is as follows. Site-specific tyrosine recombinase, which acts by catalyzing the cutting and rejoining of the recombining DNA molecules. The XerC-XerD complex is essential to convert dimers of the bacterial chromosome into monomers to permit their segregation at cell division. It also contributes to the segregational stability of plasmids. This Chromohalobacter salexigens (strain ATCC BAA-138 / DSM 3043 / CIP 106854 / NCIMB 13768 / 1H11) protein is Tyrosine recombinase XerC.